The following is a 427-amino-acid chain: Adenylosuccinate synthetase (427 aa).

Residues 12–18 and 40–42 each bind GTP; these read GDEGKGK and GHT. The active-site Proton acceptor is the Asp13. Positions 13 and 40 each coordinate Mg(2+). IMP is bound by residues 13–16, 38–41, Thr128, Arg142, Gln223, Thr238, and Arg302; these read DEGK and NAGH. Residue His41 is the Proton donor of the active site. 298–304 serves as a coordination point for substrate; that stretch reads TTTGRPR. Residues Arg304, 330–332, and 412–414 contribute to the GTP site; these read SID and SVG.

This sequence belongs to the adenylosuccinate synthetase family. As to quaternary structure, homodimer. It depends on Mg(2+) as a cofactor.

It is found in the cytoplasm. The catalysed reaction is IMP + L-aspartate + GTP = N(6)-(1,2-dicarboxyethyl)-AMP + GDP + phosphate + 2 H(+). It functions in the pathway purine metabolism; AMP biosynthesis via de novo pathway; AMP from IMP: step 1/2. In terms of biological role, plays an important role in the de novo pathway of purine nucleotide biosynthesis. Catalyzes the first committed step in the biosynthesis of AMP from IMP. The protein is Adenylosuccinate synthetase of Staphylococcus aureus (strain MW2).